Reading from the N-terminus, the 218-residue chain is Hypoxanthine-guanine phosphoribosyltransferase (218 aa).

GMP-binding positions include Lys69, 134 to 142, Lys166, 186 to 188, and Asp194; these read EDIIDTGKT and KFV. The Proton acceptor role is filled by Asp138. Asp194 lines the Mg(2+) pocket.

This sequence belongs to the purine/pyrimidine phosphoribosyltransferase family. Homotetramer. Mg(2+) serves as cofactor.

Its subcellular location is the cytoplasm. It carries out the reaction IMP + diphosphate = hypoxanthine + 5-phospho-alpha-D-ribose 1-diphosphate. The catalysed reaction is GMP + diphosphate = guanine + 5-phospho-alpha-D-ribose 1-diphosphate. Its pathway is purine metabolism; IMP biosynthesis via salvage pathway; IMP from hypoxanthine: step 1/1. Its function is as follows. Converts guanine to guanosine monophosphate, and hypoxanthine to inosine monophosphate. Transfers the 5-phosphoribosyl group from 5-phosphoribosylpyrophosphate onto the purine. Plays a central role in the generation of purine nucleotides through the purine salvage pathway. The sequence is that of Hypoxanthine-guanine phosphoribosyltransferase (HPRT1) from Gallus gallus (Chicken).